Consider the following 116-residue polypeptide: Ribosome-binding factor A (116 aa).

The protein belongs to the RbfA family. In terms of assembly, monomer. Binds 30S ribosomal subunits, but not 50S ribosomal subunits or 70S ribosomes.

It is found in the cytoplasm. Its function is as follows. One of several proteins that assist in the late maturation steps of the functional core of the 30S ribosomal subunit. Associates with free 30S ribosomal subunits (but not with 30S subunits that are part of 70S ribosomes or polysomes). Required for efficient processing of 16S rRNA. May interact with the 5'-terminal helix region of 16S rRNA. In Streptococcus pyogenes serotype M3 (strain SSI-1), this protein is Ribosome-binding factor A.